Here is a 156-residue protein sequence, read N- to C-terminus: ATP synthase subunit b (156 aa).

A helical membrane pass occupies residues M1–V21.

It belongs to the ATPase B chain family. In terms of assembly, F-type ATPases have 2 components, F(1) - the catalytic core - and F(0) - the membrane proton channel. F(1) has five subunits: alpha(3), beta(3), gamma(1), delta(1), epsilon(1). F(0) has three main subunits: a(1), b(2) and c(10-14). The alpha and beta chains form an alternating ring which encloses part of the gamma chain. F(1) is attached to F(0) by a central stalk formed by the gamma and epsilon chains, while a peripheral stalk is formed by the delta and b chains.

It is found in the cell inner membrane. Functionally, f(1)F(0) ATP synthase produces ATP from ADP in the presence of a proton or sodium gradient. F-type ATPases consist of two structural domains, F(1) containing the extramembraneous catalytic core and F(0) containing the membrane proton channel, linked together by a central stalk and a peripheral stalk. During catalysis, ATP synthesis in the catalytic domain of F(1) is coupled via a rotary mechanism of the central stalk subunits to proton translocation. Its function is as follows. Component of the F(0) channel, it forms part of the peripheral stalk, linking F(1) to F(0). The chain is ATP synthase subunit b from Nitrosococcus oceani (strain ATCC 19707 / BCRC 17464 / JCM 30415 / NCIMB 11848 / C-107).